We begin with the raw amino-acid sequence, 594 residues long: Arginine--tRNA ligase (594 aa).

Positions 139–149 (ANPTGPLHVGH) match the 'HIGH' region motif.

The protein belongs to the class-I aminoacyl-tRNA synthetase family. In terms of assembly, monomer.

Its subcellular location is the cytoplasm. The enzyme catalyses tRNA(Arg) + L-arginine + ATP = L-arginyl-tRNA(Arg) + AMP + diphosphate. This is Arginine--tRNA ligase from Paraburkholderia phymatum (strain DSM 17167 / CIP 108236 / LMG 21445 / STM815) (Burkholderia phymatum).